The primary structure comprises 86 residues: Putative regulatory protein OB1501 (86 aa).

It belongs to the RemA family.

In Oceanobacillus iheyensis (strain DSM 14371 / CIP 107618 / JCM 11309 / KCTC 3954 / HTE831), this protein is Putative regulatory protein OB1501.